A 495-amino-acid chain; its full sequence is MAKPKKTPRPKAETPKGFRDYFGAEVTQRTEMLRDIAGVYHRYGFEALESSAVETVEALGKFLPDVDRPNEGVFAWQESEDDGAGDWMALRYDLTAPLARVYAQHRNDLPTPYRRYAMGPVWRNEKPGPGRYRQFYQCDADTVGSASMAADAEICAMLSDTLETVGIPRGDYVVRVNNRKVLNGVLETMGLADEGQRDAVLRTIDKFDKVGEDGVRELLGKGRLDASGAFIDGVGLSDDQAGPVLAFLTSRGADAATTVANLRAAVGASQIGVQGIDELEQIGDLLAAGGYGPDRIVIDPSVVRGLGYYTGPVYEAELTFEIFDEKGRKRQFGSVSGGGRYDDLVKRFTGQEVPATGVSIGVDRLLAALREKGRIRTAERGPVVVTVMDRDRMADYQAMVAELRNAGIRAEVYLGNPKNFGNQLKYADKRNSPVAVIEGGDERANGVVQIKDLILGAQIAANATLEEWKERPSQYEVARADLVAKVREILAEQAG.

The protein belongs to the class-II aminoacyl-tRNA synthetase family. Homodimer.

The protein localises to the cytoplasm. It catalyses the reaction tRNA(His) + L-histidine + ATP = L-histidyl-tRNA(His) + AMP + diphosphate + H(+). The chain is Histidine--tRNA ligase from Ruegeria pomeroyi (strain ATCC 700808 / DSM 15171 / DSS-3) (Silicibacter pomeroyi).